Here is a 231-residue protein sequence, read N- to C-terminus: Orotidine 5'-phosphate decarboxylase (231 aa).

Substrate contacts are provided by residues aspartate 11, lysine 32, 59-68 (DLKFHDIPNT), threonine 118, arginine 180, glutamine 189, glycine 209, and arginine 210. Residue lysine 61 is the Proton donor of the active site.

The protein belongs to the OMP decarboxylase family. Type 1 subfamily. Homodimer.

The enzyme catalyses orotidine 5'-phosphate + H(+) = UMP + CO2. The protein operates within pyrimidine metabolism; UMP biosynthesis via de novo pathway; UMP from orotate: step 2/2. Functionally, catalyzes the decarboxylation of orotidine 5'-monophosphate (OMP) to uridine 5'-monophosphate (UMP). This Synechocystis sp. (strain ATCC 27184 / PCC 6803 / Kazusa) protein is Orotidine 5'-phosphate decarboxylase.